We begin with the raw amino-acid sequence, 320 residues long: Cytosolic Fe-S cluster assembly factor NUBP1 (320 aa).

Methionine 1 carries the post-translational modification N-acetylmethionine. Cysteine 8, cysteine 22, cysteine 25, and cysteine 31 together coordinate [4Fe-4S] cluster. Position 62–69 (62–69 (GKGGVGKS)) interacts with ATP. 2 residues coordinate [4Fe-4S] cluster: cysteine 235 and cysteine 238.

This sequence belongs to the Mrp/NBP35 ATP-binding proteins family. NUBP1/NBP35 subfamily. As to quaternary structure, heterotetramer of 2 NUBP1 and 2 NUBP2 chains. Interacts with KIFC1. Interacts with the BBS/CCT complex subunit CCT1. [4Fe-4S] cluster serves as cofactor.

It is found in the cytoplasm. The protein localises to the nucleus. Its subcellular location is the cell projection. The protein resides in the cytoskeleton. It localises to the cilium axoneme. It is found in the cilium basal body. The protein localises to the microtubule organizing center. Its subcellular location is the centrosome. The protein resides in the centriole. In terms of biological role, component of the cytosolic iron-sulfur (Fe/S) protein assembly (CIA) machinery. Required for maturation of extramitochondrial Fe-S proteins. The NUBP1-NUBP2 heterotetramer forms a Fe-S scaffold complex, mediating the de novo assembly of an Fe-S cluster and its transfer to target apoproteins. Implicated in the regulation of centrosome duplication. Negatively regulates cilium formation and structure. The polypeptide is Cytosolic Fe-S cluster assembly factor NUBP1 (Bos taurus (Bovine)).